The primary structure comprises 312 residues: Glyoxylate/hydroxypyruvate reductase A (312 aa).

The active site involves Arg227. His275 (proton donor) is an active-site residue.

The protein belongs to the D-isomer specific 2-hydroxyacid dehydrogenase family. GhrA subfamily.

The protein localises to the cytoplasm. The enzyme catalyses glycolate + NADP(+) = glyoxylate + NADPH + H(+). The catalysed reaction is (R)-glycerate + NAD(+) = 3-hydroxypyruvate + NADH + H(+). It catalyses the reaction (R)-glycerate + NADP(+) = 3-hydroxypyruvate + NADPH + H(+). Catalyzes the NADPH-dependent reduction of glyoxylate and hydroxypyruvate into glycolate and glycerate, respectively. This Salmonella heidelberg (strain SL476) protein is Glyoxylate/hydroxypyruvate reductase A.